Reading from the N-terminus, the 165-residue chain is MEKLIEKIIYASRWLMFPVYIGLSFGFILLTLKFFQQIILVIPKILIMSESGLILIVLSLIDIALVGGLLVMVMFSGYENFISKMEINVDKKKLGWMGTMDVNSIKNKVASSIVAISSVHLLRLFMDADKISNDKIMWCVIIHLTFVLSAFGMACIDKMSKKNYS.

Transmembrane regions (helical) follow at residues 10–32 (YASRWLMFPVYIGLSFGFILLTL), 53–75 (LILIVLSLIDIALVGGLLVMVMF), and 136–155 (IMWCVIIHLTFVLSAFGMAC).

Belongs to the UPF0114 family.

It is found in the cell membrane. The sequence is that of UPF0114 protein in repA1-repA2 intergenic region from Buchnera aphidicola subsp. Geoica urticularia.